The sequence spans 516 residues: Glycosyltransferase-like protein gnt15 (516 aa).

Residues 1-24 (MSNFYNNNPRRNTFRLTERIKKKP) lie on the Cytoplasmic side of the membrane. A helical; Signal-anchor for type II membrane protein membrane pass occupies residues 25-45 (YQTLIVFILIFLFLYVFGPFG). At 46 to 516 (EKKSNNNNNN…NDNCLTREHW (471 aa)) the chain is on the extracellular side. Asparagine 152 is a glycosylation site (N-linked (GlcNAc...) asparagine). Positions 199 to 250 (DTSNNNNNNNNNNNNNNNNNNNNNNNNNNNNNNNENNDNDNGNNNNNNDNEK) are disordered. Low complexity predominate over residues 202-246 (NNNNNNNNNNNNNNNNNNNNNNNNNNNNNNNENNDNDNGNNNNNN). N-linked (GlcNAc...) asparagine glycans are attached at residues asparagine 386 and asparagine 412.

It belongs to the glycosyltransferase 8 family. Highly divergent.

It is found in the membrane. Functionally, may have a role in modulating cell adhesion and glycosylation. Essential for development. This chain is Glycosyltransferase-like protein gnt15 (gnt15), found in Dictyostelium discoideum (Social amoeba).